Consider the following 1274-residue polypeptide: Virulence protein SSD1 (1274 aa).

Residues 1–13 are compositionally biased toward low complexity; that stretch reads MSSSQDYNNNSNN. 4 disordered regions span residues 1-38, 61-124, 138-337, and 413-488; these read MSSS…SELT, LEEK…GHSR, ANQK…TLFA, and KEKE…DDVE. Residues 19–32 are compositionally biased toward basic residues; sequence SSRKGKNLHVAHRR. Residues 72 to 81 are compositionally biased toward polar residues; the sequence is FTYPSAQGSS. Residues 95–106 show a composition bias toward low complexity; sequence NRSSHSRSSSIN. The span at 139-152 shows a compositional bias: polar residues; that stretch reads NQKQSNRNSLSPTI. Low complexity predominate over residues 177–187; the sequence is GDTSGQSSSSH. A compositionally biased stretch (polar residues) spans 248–263; sequence SGSNTNTDGINSNWRA. Low complexity predominate over residues 264-282; that stretch reads QQQSPQQQQRQGGLLEPPQ. Residues 320–330 are compositionally biased toward gly residues; sequence QQGGHQGGGNN. Residues 413–437 are compositionally biased toward basic and acidic residues; sequence KEKEEKKRRKDNTLHSRPLTDDIHN. Over residues 438–453 the composition is skewed to polar residues; it reads DATSAPNTAEGSVTGT. The CSD2 domain maps to 562-637; the sequence is VWFKPTDKKV…EIDSILRDNN (76 aa). One can recognise an RNB domain in the interval 688–1001; it reads FVDHALHVKR…VHRQLKAVLN (314 aa). Positions 1050–1136 constitute a DIS3L2 C-terminal domain; it reads GQLLCMGTVV…KNKYRTSALQ (87 aa). Residues 1174-1217 form a disordered region; the sequence is SLKSNELHEVEKDETKSMPSSPTQSEIPKNVRTNSSSRISSSGN. A compositionally biased stretch (basic and acidic residues) spans 1178-1189; that stretch reads NELHEVEKDETK. The segment covering 1190–1207 has biased composition (polar residues); sequence SMPSSPTQSEIPKNVRTN.

It belongs to the RNR ribonuclease family.

Plays a role in resistance to host antimicrobial peptides such as protamine, RP-1, or human beta-defensin-2; allowing colonization of human tissues. Required for resistance to membrane permeabilization and maintenance of mitochondrial membrane potential upon exposure to RP-1. This Candida albicans (strain SC5314 / ATCC MYA-2876) (Yeast) protein is Virulence protein SSD1 (SSD1).